A 61-amino-acid chain; its full sequence is uncharacterized protein (61 aa).

Its subcellular location is the mitochondrion. This is an uncharacterized protein from Marchantia polymorpha (Common liverwort).